The following is a 376-amino-acid chain: 4-hydroxy-3-methylbut-2-enyl diphosphate reductase (376 aa).

[4Fe-4S] cluster is bound at residue Cys19. Positions 48 and 99 each coordinate (2E)-4-hydroxy-3-methylbut-2-enyl diphosphate. 2 residues coordinate dimethylallyl diphosphate: His48 and His99. The isopentenyl diphosphate site is built by His48 and His99. Residue Cys121 coordinates [4Fe-4S] cluster. His149 contributes to the (2E)-4-hydroxy-3-methylbut-2-enyl diphosphate binding site. Dimethylallyl diphosphate is bound at residue His149. Residue His149 coordinates isopentenyl diphosphate. Glu151 acts as the Proton donor in catalysis. Thr208 contacts (2E)-4-hydroxy-3-methylbut-2-enyl diphosphate. [4Fe-4S] cluster is bound at residue Cys236. 3 residues coordinate (2E)-4-hydroxy-3-methylbut-2-enyl diphosphate: Ser264, Asn266, and Ser307. 3 residues coordinate dimethylallyl diphosphate: Ser264, Asn266, and Ser307. Residues Ser264, Asn266, and Ser307 each coordinate isopentenyl diphosphate.

This sequence belongs to the IspH family. The cofactor is [4Fe-4S] cluster.

It catalyses the reaction isopentenyl diphosphate + 2 oxidized [2Fe-2S]-[ferredoxin] + H2O = (2E)-4-hydroxy-3-methylbut-2-enyl diphosphate + 2 reduced [2Fe-2S]-[ferredoxin] + 2 H(+). The catalysed reaction is dimethylallyl diphosphate + 2 oxidized [2Fe-2S]-[ferredoxin] + H2O = (2E)-4-hydroxy-3-methylbut-2-enyl diphosphate + 2 reduced [2Fe-2S]-[ferredoxin] + 2 H(+). Its pathway is isoprenoid biosynthesis; dimethylallyl diphosphate biosynthesis; dimethylallyl diphosphate from (2E)-4-hydroxy-3-methylbutenyl diphosphate: step 1/1. It participates in isoprenoid biosynthesis; isopentenyl diphosphate biosynthesis via DXP pathway; isopentenyl diphosphate from 1-deoxy-D-xylulose 5-phosphate: step 6/6. Catalyzes the conversion of 1-hydroxy-2-methyl-2-(E)-butenyl 4-diphosphate (HMBPP) into a mixture of isopentenyl diphosphate (IPP) and dimethylallyl diphosphate (DMAPP). Acts in the terminal step of the DOXP/MEP pathway for isoprenoid precursor biosynthesis. In Treponema pallidum (strain Nichols), this protein is 4-hydroxy-3-methylbut-2-enyl diphosphate reductase.